Reading from the N-terminus, the 149-residue chain is Glutamyl-tRNA(Gln) amidotransferase subunit C, mitochondrial (149 aa).

It belongs to the GatC family. As to quaternary structure, subunit of the heterotrimeric GatCAB amidotransferase (AdT) complex, composed of A, B and C subunits.

Its subcellular location is the mitochondrion. The catalysed reaction is L-glutamyl-tRNA(Gln) + L-glutamine + ATP + H2O = L-glutaminyl-tRNA(Gln) + L-glutamate + ADP + phosphate + H(+). In terms of biological role, allows the formation of correctly charged Gln-tRNA(Gln) through the transamidation of misacylated Glu-tRNA(Gln) in the mitochondria. The reaction takes place in the presence of glutamine and ATP through an activated gamma-phospho-Glu-tRNA(Gln). The polypeptide is Glutamyl-tRNA(Gln) amidotransferase subunit C, mitochondrial (Trichoplax adhaerens (Trichoplax reptans)).